We begin with the raw amino-acid sequence, 550 residues long: CTP synthase (550 aa).

An amidoligase domain region spans residues 1–272; sequence MKTKFIFITG…DQKITSFLNL (272 aa). Ser14 serves as a coordination point for CTP. Ser14 contacts UTP. 15–20 lines the ATP pocket; that stretch reads SLGKGL. Tyr55 contributes to the L-glutamine binding site. Asp72 serves as a coordination point for ATP. Residues Asp72 and Glu146 each contribute to the Mg(2+) site. CTP-binding positions include 153–155, 193–198, and Lys229; these read DIE and KTKPTQ. UTP contacts are provided by residues 193–198 and Lys229; that span reads KTKPTQ. In terms of domain architecture, Glutamine amidotransferase type-1 spans 297-550; that stretch reads TITIVGKYVG…IHAACNHNKQ (254 aa). Gly359 contributes to the L-glutamine binding site. Cys386 functions as the Nucleophile; for glutamine hydrolysis in the catalytic mechanism. Residues 387–390, Glu410, and Arg478 contribute to the L-glutamine site; that span reads LGMQ. Residues His523 and Glu525 contribute to the active site.

The protein belongs to the CTP synthase family. Homotetramer.

It carries out the reaction UTP + L-glutamine + ATP + H2O = CTP + L-glutamate + ADP + phosphate + 2 H(+). The enzyme catalyses L-glutamine + H2O = L-glutamate + NH4(+). The catalysed reaction is UTP + NH4(+) + ATP = CTP + ADP + phosphate + 2 H(+). Its pathway is pyrimidine metabolism; CTP biosynthesis via de novo pathway; CTP from UDP: step 2/2. With respect to regulation, allosterically activated by GTP, when glutamine is the substrate; GTP has no effect on the reaction when ammonia is the substrate. The allosteric effector GTP functions by stabilizing the protein conformation that binds the tetrahedral intermediate(s) formed during glutamine hydrolysis. Inhibited by the product CTP, via allosteric rather than competitive inhibition. In terms of biological role, catalyzes the ATP-dependent amination of UTP to CTP with either L-glutamine or ammonia as the source of nitrogen. Regulates intracellular CTP levels through interactions with the four ribonucleotide triphosphates. The protein is CTP synthase of Lawsonia intracellularis (strain PHE/MN1-00).